Consider the following 251-residue polypeptide: Triosephosphate isomerase (251 aa).

A substrate-binding site is contributed by 9–11; it reads NWK. H95 (electrophile) is an active-site residue. The Proton acceptor role is filled by E167. Substrate is bound by residues G173, S213, and 234 to 235; that span reads GG. Position 213 is a phosphoserine (S213).

This sequence belongs to the triosephosphate isomerase family. Homodimer.

It is found in the cytoplasm. It catalyses the reaction D-glyceraldehyde 3-phosphate = dihydroxyacetone phosphate. Its pathway is carbohydrate biosynthesis; gluconeogenesis. It functions in the pathway carbohydrate degradation; glycolysis; D-glyceraldehyde 3-phosphate from glycerone phosphate: step 1/1. In terms of biological role, involved in the gluconeogenesis. Catalyzes stereospecifically the conversion of dihydroxyacetone phosphate (DHAP) to D-glyceraldehyde-3-phosphate (G3P). This Halalkalibacterium halodurans (strain ATCC BAA-125 / DSM 18197 / FERM 7344 / JCM 9153 / C-125) (Bacillus halodurans) protein is Triosephosphate isomerase.